The following is a 325-amino-acid chain: uncharacterized protein (325 aa).

The N-terminal 69 residues, 1–69 (MAMMTTTTTT…KNRRVSVTVS (69 aa)), are a transit peptide targeting the chloroplast. Residue Ala70 is modified to N-acetylalanine.

It belongs to the NAD(P)-dependent epimerase/dehydratase family.

It localises to the plastid. Its subcellular location is the chloroplast. This is an uncharacterized protein from Arabidopsis thaliana (Mouse-ear cress).